The primary structure comprises 392 residues: Multidrug resistance protein MdtL (392 aa).

The next 12 helical transmembrane spans lie at 4-24 (FLLC…MYLV), 38-58 (AQLH…MLFA), 69-89 (PVAI…AQVH), 95-115 (LIGR…AFAI), 131-151 (LLNG…HLIM), 158-178 (SLFY…VFIL), 209-229 (LLIT…SPVL), 246-266 (ALMA…LSLF), 270-290 (TLML…SLAT), 294-314 (VTLI…GVAM), 331-351 (VLGI…AIIG), and 357-377 (MLIG…LVVT).

Belongs to the major facilitator superfamily. DHA1 family. MdtL (TC 2.A.1.2.22) subfamily.

It localises to the cell inner membrane. The sequence is that of Multidrug resistance protein MdtL from Klebsiella pneumoniae subsp. pneumoniae (strain ATCC 700721 / MGH 78578).